The primary structure comprises 419 residues: Cytosine permease (419 aa).

The Cytoplasmic segment spans residues 1-19; it reads MSQDNNFSQGPVPQSARKG. A helical transmembrane segment spans residues 20 to 39; it reads VLALTFVMLGLTFFSASMWT. Residues 40–51 lie on the Periplasmic side of the membrane; the sequence is GGTLGTGLSYHD. The helical transmembrane segment at 52-71 threads the bilayer; the sequence is FFLAVLIGNLLLGIYTSFLG. The Cytoplasmic portion of the chain corresponds to 72–100; that stretch reads YIGAKTGLTTHLLARFSFGVKGSWLPSLL. The helical transmembrane segment at 101–120 threads the bilayer; the sequence is LGGTQVGWFGVGVAMFAIPV. Topologically, residues 121-127 are periplasmic; the sequence is GKATGLD. The helical transmembrane segment at 128–147 threads the bilayer; sequence INLLIAVSGLLMTVTVFFGI. The Cytoplasmic segment spans residues 148-152; it reads SALTV. Residues 153–172 form a helical membrane-spanning segment; that stretch reads LSVIAVPAIACLGGYSVWLA. At 173-192 the chain is on the periplasmic side; that stretch reads VNGMGGLDALKAVVPAQPLD. A helical membrane pass occupies residues 193 to 212; that stretch reads FNVALALVVGSFISAGTLTA. The Cytoplasmic portion of the chain corresponds to 213–221; that stretch reads DFVRFGRNA. The helical transmembrane segment at 222–242 threads the bilayer; the sequence is KLAVLVAMVAFFLGNSLMFIF. The Periplasmic portion of the chain corresponds to 243-257; that stretch reads GAAGAAALGMADISD. A helical membrane pass occupies residues 258 to 277; that stretch reads VMIAQGLLLPAIVVLGLNIW. At 278–300 the chain is on the cytoplasmic side; sequence TTNDNALYASGLGFANITGMSSK. The chain crosses the membrane as a helical span at residues 301-320; it reads TLSVINGIIGTVCALWLYNN. Residue Phe321 is a topological domain, periplasmic. A helical transmembrane segment spans residues 322–341; that stretch reads VGWLTFLSAAIPPVGGVIIA. Residues 342 to 358 are Cytoplasmic-facing; that stretch reads DYLMNRRRYEHFATTRM. A helical transmembrane segment spans residues 359-378; it reads MSVNWVAILAVALGIAAGHW. The Periplasmic segment spans residues 379-380; it reads LP. Residues 381–400 traverse the membrane as a helical segment; the sequence is GIVPVNAVLGGALSYLILNP. Residues 401–419 lie on the Cytoplasmic side of the membrane; sequence ILNRKTTAAMTHVEANSVE.

The protein belongs to the purine-cytosine permease (2.A.39) family.

It is found in the cell inner membrane. Its function is as follows. Required for cytosine transport into the cell. The chain is Cytosine permease (codB) from Escherichia coli O6:H1 (strain CFT073 / ATCC 700928 / UPEC).